The primary structure comprises 351 residues: DNA polymerase IV (351 aa).

Positions 4–185 constitute a UmuC domain; the sequence is IIHVDMDCFF…LPLAKIPGVG (182 aa). Positions 8 and 103 each coordinate Mg(2+). E104 is a catalytic residue.

The protein belongs to the DNA polymerase type-Y family. As to quaternary structure, monomer. Mg(2+) serves as cofactor.

It localises to the cytoplasm. The catalysed reaction is DNA(n) + a 2'-deoxyribonucleoside 5'-triphosphate = DNA(n+1) + diphosphate. Its function is as follows. Poorly processive, error-prone DNA polymerase involved in untargeted mutagenesis. Copies undamaged DNA at stalled replication forks, which arise in vivo from mismatched or misaligned primer ends. These misaligned primers can be extended by PolIV. Exhibits no 3'-5' exonuclease (proofreading) activity. May be involved in translesional synthesis, in conjunction with the beta clamp from PolIII. In Escherichia coli (strain ATCC 8739 / DSM 1576 / NBRC 3972 / NCIMB 8545 / WDCM 00012 / Crooks), this protein is DNA polymerase IV.